Here is a 331-residue protein sequence, read N- to C-terminus: Biotin synthase (331 aa).

In terms of domain architecture, Radical SAM core spans 52–277 (PDVEVEGIIS…RTMLRFAGGR (226 aa)). Residues Cys-67, Cys-71, and Cys-74 each coordinate [4Fe-4S] cluster. [2Fe-2S] cluster-binding residues include Cys-110, Cys-143, Cys-202, and Arg-272.

It belongs to the radical SAM superfamily. Biotin synthase family. As to quaternary structure, homodimer. It depends on [4Fe-4S] cluster as a cofactor. [2Fe-2S] cluster serves as cofactor.

It catalyses the reaction (4R,5S)-dethiobiotin + (sulfur carrier)-SH + 2 reduced [2Fe-2S]-[ferredoxin] + 2 S-adenosyl-L-methionine = (sulfur carrier)-H + biotin + 2 5'-deoxyadenosine + 2 L-methionine + 2 oxidized [2Fe-2S]-[ferredoxin]. It functions in the pathway cofactor biosynthesis; biotin biosynthesis; biotin from 7,8-diaminononanoate: step 2/2. Its function is as follows. Catalyzes the conversion of dethiobiotin (DTB) to biotin by the insertion of a sulfur atom into dethiobiotin via a radical-based mechanism. The sequence is that of Biotin synthase from Mycolicibacterium gilvum (strain PYR-GCK) (Mycobacterium gilvum (strain PYR-GCK)).